The sequence spans 926 residues: Tyrosine-protein phosphatase non-receptor type 4 (926 aa).

The region spanning 29-312 (VVCNILLLDN…EHHTFFRLDR (284 aa)) is the FERM domain. Disordered regions lie at residues 380–412 (DDRL…TRLR) and 430–475 (EVFV…KNSW). 2 stretches are compositionally biased toward polar residues: residues 398–408 (NHRNSTFTQEG) and 430–456 (EVFV…SQET). Residue S474 is modified to Phosphoserine. Residues 517–589 (LIRMKPDENG…DQVVLFIKAS (73 aa)) form the PDZ domain. In terms of domain architecture, Tyrosine-protein phosphatase spans 655 to 911 (VLTQFDQLYR…RFVCEAILKV (257 aa)). Residues D820, 852–858 (CSAGIGR), and Q896 each bind substrate. Residue C852 is the Phosphocysteine intermediate of the active site.

It belongs to the protein-tyrosine phosphatase family. Non-receptor class subfamily. Interacts with MAPK12 (via C-terminus); this interaction abolishes PTPN4 catalytic autoinhibition and thus activates the phosphatase activity. As to quaternary structure, (Microbial infection) Interacts with attenuated rabies virus protein G; this interaction is required for virally-induced apoptosis. Highly phosphorylated on serine and threonine residues but not on tyrosines. Post-translationally, cleaved and activated by calpain I/CAPN1.

Its subcellular location is the cell membrane. The protein resides in the cytoplasm. The protein localises to the cytoskeleton. The enzyme catalyses O-phospho-L-tyrosyl-[protein] + H2O = L-tyrosyl-[protein] + phosphate. Its function is as follows. Phosphatase that plays a role in immunity, learning, synaptic plasticity or cell homeostasis. Regulates neuronal cell homeostasis by protecting neurons against apoptosis. Negatively regulates TLR4-induced interferon beta production by dephosphorylating adapter TICAM2 and inhibiting subsequent TRAM-TRIF interaction. Also dephosphorylates the immunoreceptor tyrosine-based activation motifs/ITAMs of the TCR zeta subunit and thereby negatively regulates TCR-mediated signaling pathway. May act at junctions between the membrane and the cytoskeleton. The polypeptide is Tyrosine-protein phosphatase non-receptor type 4 (PTPN4) (Homo sapiens (Human)).